Reading from the N-terminus, the 563-residue chain is GTPase Obg (563 aa).

An Obg domain is found at Ser-2 to Ile-168. One can recognise an OBG-type G domain in the interval Ala-169–His-349. GTP is bound by residues Gly-175–Ser-182, Phe-200–Val-204, Asp-221–Gly-224, Asn-301–Asp-304, and Ser-330–Ala-332. Positions 182 and 202 each coordinate Mg(2+). The region spanning Asp-383–Pro-469 is the OCT domain. Positions Arg-529–Glu-563 are disordered.

The protein belongs to the TRAFAC class OBG-HflX-like GTPase superfamily. OBG GTPase family. Monomer. Mg(2+) serves as cofactor.

The protein localises to the cytoplasm. An essential GTPase which binds GTP, GDP and possibly (p)ppGpp with moderate affinity, with high nucleotide exchange rates and a fairly low GTP hydrolysis rate. Plays a role in control of the cell cycle, stress response, ribosome biogenesis and in those bacteria that undergo differentiation, in morphogenesis control. The protein is GTPase Obg of Bifidobacterium longum (strain DJO10A).